The sequence spans 54 residues: Large ribosomal subunit protein bL33 (54 aa).

Belongs to the bacterial ribosomal protein bL33 family.

This Chloroflexus aggregans (strain MD-66 / DSM 9485) protein is Large ribosomal subunit protein bL33.